Here is a 432-residue protein sequence, read N- to C-terminus: Amino-acid acetyltransferase (432 aa).

The N-acetyltransferase domain occupies E286–L432.

It belongs to the acetyltransferase family. ArgA subfamily.

The protein resides in the cytoplasm. It carries out the reaction L-glutamate + acetyl-CoA = N-acetyl-L-glutamate + CoA + H(+). It participates in amino-acid biosynthesis; L-arginine biosynthesis; N(2)-acetyl-L-ornithine from L-glutamate: step 1/4. This is Amino-acid acetyltransferase (argA) from Pseudomonas putida (strain ATCC 47054 / DSM 6125 / CFBP 8728 / NCIMB 11950 / KT2440).